A 517-amino-acid polypeptide reads, in one-letter code: 2-isopropylmalate synthase (517 aa).

The region spanning 6-267 is the Pyruvate carboxyltransferase domain; the sequence is IIVFDTTLRD…YTTINTPEIY (262 aa). 4 residues coordinate Mn(2+): D15, H201, H203, and N237. The regulatory domain stretch occupies residues 393–517; sequence DLIGLQISDC…RLSKSSEHQV (125 aa).

Belongs to the alpha-IPM synthase/homocitrate synthase family. LeuA type 1 subfamily. Homodimer. Requires Mn(2+) as cofactor.

The protein localises to the cytoplasm. It carries out the reaction 3-methyl-2-oxobutanoate + acetyl-CoA + H2O = (2S)-2-isopropylmalate + CoA + H(+). Its pathway is amino-acid biosynthesis; L-leucine biosynthesis; L-leucine from 3-methyl-2-oxobutanoate: step 1/4. Catalyzes the condensation of the acetyl group of acetyl-CoA with 3-methyl-2-oxobutanoate (2-ketoisovalerate) to form 3-carboxy-3-hydroxy-4-methylpentanoate (2-isopropylmalate). This Aliarcobacter butzleri (strain RM4018) (Arcobacter butzleri) protein is 2-isopropylmalate synthase.